The sequence spans 926 residues: Piwi-like protein Ago3 (926 aa).

A disordered region spans residues 1-62 (MADPGKGRGR…PSTSGVSIGG (62 aa)). Low complexity predominate over residues 26 to 56 (SPSQSESQSPESTPEQSTAPSTIASATPSTS). One can recognise a PAZ domain in the interval 339-455 (TVLSLIKEVV…LIPELCQLTG (117 aa)). The 293-residue stretch at 620–912 (LVVAICSTKR…LSYLVGQCVH (293 aa)) folds into the Piwi domain. Gln672 is a binding site for Mg(2+). Active-site residues include Asp697, Glu735, Asp767, and His901. Residue Leu926 coordinates Mg(2+).

The protein belongs to the argonaute family. Piwi subfamily. As to quaternary structure, interacts (when symmetrically methylated) with Papi/TDRKH. Interacts with Vasa. Mg(2+) is required as a cofactor. Post-translationally, arginine methylation is required for the interaction with Tudor domain-containing protein Papi/TDRKH. Highly expressed in the larval testis, pupal ovary and adult eggs.

The protein resides in the cytoplasm. Its function is as follows. Endoribonuclease that plays a central role during spermatogenesis by repressing transposable elements and preventing their mobilization, which is essential for the germline integrity. Plays an essential role in meiotic differentiation of spermatocytes, germ cell differentiation and in self-renewal of spermatogonial stem cells. Its presence in oocytes suggests that it may participate in similar functions during oogenesis in females. Acts via the piRNA metabolic process, which mediates the repression of transposable elements during meiosis by forming complexes composed of piRNAs and Piwi proteins and govern the methylation and subsequent repression of transposons. Directly binds piRNAs, a class of 24 to 30 nucleotide RNAs that are generated by a Dicer-independent mechanism and are primarily derived from transposons and other repeated sequence elements. Strongly prefers a have adenine at position 10 of their guide (g10A preference). Plays a key role in the piRNA amplification loop, also named ping-pong amplification cycle: antisense piRNA-bound Siwi and sense piRNA-bound Ago3 reciprocally cleave complementary transcripts, to couple the amplification of piRNAs with the repression of transposable elements. The protein is Piwi-like protein Ago3 (AGO3) of Bombyx mori (Silk moth).